Reading from the N-terminus, the 312-residue chain is MGVHLEVLDTGEQLMVPVDVLEEENKGTLWKFLLSGAMAGAVSRTGTAPLDRARVYMQVYSSKSNFRNLLSGLRSLVQEGGVRSLWRGNGINVLKIAPEYAIKFSVCEQSKNFFYGVHSSQLFQERVVAGSLAVAVSQTLINPMEVLKTRLTLRFTGQYKGLLDCARQILERDGTRALYRGYLPNMLGIIPYACTDLAVYELLQCLWQKLGRDMKDPSGLVSLSSVTLSTTCGQMASYPLTLVRTRMQAQDTVEGSNPTMQGVFKRILSQQGWPGLYRGMTPTLLKVLPAGGISYLVYEAMKKTLGVQVLSR.

Solcar repeat units lie at residues 27–113 (GTLW…SKNF), 121–206 (QLFQ…LQCL), and 217–304 (PSGL…MKKT). Transmembrane regions (helical) follow at residues 33–50 (LLSGAMAGAVSRTGTAPL), 88–107 (GNGINVLKIAPEYAIKFSVC), 131–144 (SLAVAVSQTLINPM), 182–200 (YLPNMLGIIPYACTDLAVY), 219–243 (GLVSLSSVTLSTTCGQMASYPLTLV), and 279–298 (GMTPTLLKVLPAGGISYLVY).

The protein belongs to the mitochondrial carrier (TC 2.A.29) family. In terms of tissue distribution, mainly expressed in testis and at lesser levels in brain.

It localises to the mitochondrion inner membrane. It carries out the reaction Mg(2+)(out) + phosphate(in) + ATP(out) = Mg(2+)(in) + phosphate(out) + ATP(in). It catalyses the reaction ADP(out) + phosphate(in) + H(+)(out) = ADP(in) + phosphate(out) + H(+)(in). Functionally, calcium-independent ATP-Mg/Pi exchanger that catalyzes the electroneutral exchange of Mg-ATP or free ADP against an hydrogenphosphate and participates in the net transport of adenine nucleotides across the mitochondria inner membrane. The protein is Calcium-independent mitochondrial carrier protein SCaMC-3L of Mus musculus (Mouse).